Consider the following 127-residue polypeptide: Fumarate reductase subunit C (127 aa).

Transmembrane regions (helical) follow at residues Ala-30–Val-50, Gly-58–Gly-78, and Ile-107–Val-127.

Belongs to the FrdC family. Part of an enzyme complex containing four subunits: a flavoprotein (FrdA), an iron-sulfur protein (FrdB), and two hydrophobic anchor proteins (FrdC and FrdD).

The protein localises to the cell inner membrane. In terms of biological role, anchors the catalytic components of the fumarate reductase complex to the cell membrane, binds quinones. In Vibrio parahaemolyticus serotype O3:K6 (strain RIMD 2210633), this protein is Fumarate reductase subunit C.